Reading from the N-terminus, the 144-residue chain is uncharacterized protein (144 aa).

Residues 1–22 form the signal peptide; sequence MCTDVAFFSLDCLATWLGGVCS.

This is an uncharacterized protein from Saccharomyces cerevisiae (strain ATCC 204508 / S288c) (Baker's yeast).